The sequence spans 165 residues: Cytochrome c-type biogenesis protein CcmE (165 aa).

The Cytoplasmic portion of the chain corresponds to 1 to 29 (MSATAEQNARNPKGKGGFARTVSQRKRKR). Residues 30–50 (LFLIGGALAVLAVAVGLMLTA) traverse the membrane as a helical; Signal-anchor for type II membrane protein segment. At 51-165 (FNQDIRFFRT…LKKKGVWEGK (115 aa)) the chain is on the periplasmic side. Heme-binding residues include histidine 143 and tyrosine 147.

It belongs to the CcmE/CycJ family.

The protein resides in the cell inner membrane. Functionally, heme chaperone required for the biogenesis of c-type cytochromes. Transiently binds heme delivered by CcmC and transfers the heme to apo-cytochromes in a process facilitated by CcmF and CcmH. The polypeptide is Cytochrome c-type biogenesis protein CcmE (Brucella abortus (strain S19)).